The sequence spans 303 residues: Taste receptor type 2 member 13 (303 aa).

Residues 1–7 lie on the Extracellular side of the membrane; that stretch reads MESALLS. The chain crosses the membrane as a helical span at residues 8–28; the sequence is ILTLVIIAEFVIGNLSNGFXV. Over 29–55 the chain is Cytoplasmic; the sequence is LINCIDWVSKRQLSSVDKILTFLAISR. The helical transmembrane segment at 56–76 threads the bilayer; that stretch reads IGLIWELLVSWFLGLHYLAIF. The Extracellular segment spans residues 77–85; sequence VSGTGLRIM. The helical transmembrane segment at 86–106 threads the bilayer; sequence IFSWVVSNHFSLWLATILSIF. At 107–128 the chain is on the cytoplasmic side; the sequence is YLLKIASFSSPAFLYLKWRVNQ. The chain crosses the membrane as a helical span at residues 129-149; sequence VILMILLGTLVFLFLNLIQIN. Residues 150–184 are Extracellular-facing; sequence IHIKDWLDRCERNTIWNFSMSGLPTFSVPVKFTMT. An N-linked (GlcNAc...) asparagine glycan is attached at asparagine 166. Residues 185–205 traverse the membrane as a helical segment; the sequence is MFSLAPFTVALISFLLLIFSL. The Cytoplasmic portion of the chain corresponds to 206–232; it reads RKHLQKMQLNYKGHREPRTKAHINALK. A helical transmembrane segment spans residues 233 to 253; the sequence is IVISFLLLYASFFLCILISWI. At 254 to 261 the chain is on the extracellular side; that stretch reads SELYQNTL. A helical membrane pass occupies residues 262 to 282; the sequence is IHMFCQTIGVFYPSSHSFLLI. Over 283–303 the chain is Cytoplasmic; sequence LGNPKLRQASLLVAAKVWAKR.

This sequence belongs to the G-protein coupled receptor T2R family.

It is found in the membrane. In terms of biological role, receptor that may play a role in the perception of bitterness and is gustducin-linked. May play a role in sensing the chemical composition of the gastrointestinal content. The activity of this receptor may stimulate alpha gustducin, mediate PLC-beta-2 activation and lead to the gating of TRPM5. This is Taste receptor type 2 member 13 (TAS2R13) from Papio hamadryas (Hamadryas baboon).